A 481-amino-acid chain; its full sequence is F-box/FBD/LRR-repeat protein At5g18770 (481 aa).

The 47-residue stretch at 23–69 folds into the F-box domain; that stretch reads EDMISALPDHLLCHILIFLSTDESVLTSVLSSRWRNLWKWVPRLDLN. LRR repeat units lie at residues 126–153, 159–185, 186–211, 214–234, 236–261, 289–314, and 340–368; these read KPNV…TLSA, CLKL…YLED, VVFP…KLSL, DDVV…TLKR, VPVY…SLID, DELS…TISW, and ATMS…HFTL. The FBD domain maps to 378–430; it reads VITGFSRVLPRCLVFSLESVEMESPITEKATELKLVRYFLENSATLKKLVLLL.

The chain is F-box/FBD/LRR-repeat protein At5g18770 from Arabidopsis thaliana (Mouse-ear cress).